Here is a 226-residue protein sequence, read N- to C-terminus: ATP synthase F(0) complex subunit a (226 aa).

6 helical membrane passes run 12–32 (PTMM…ILFP), 68–88 (WALM…LGLL), 97–117 (QLSM…ITGF), 138–158 (IPML…ALAV), 164–184 (ITAG…LMNI), and 200–222 (TILE…SLYL).

It belongs to the ATPase A chain family. In terms of assembly, component of the ATP synthase complex composed at least of ATP5F1A/subunit alpha, ATP5F1B/subunit beta, ATP5MC1/subunit c (homooctomer), MT-ATP6/subunit a, MT-ATP8/subunit 8, ATP5ME/subunit e, ATP5MF/subunit f, ATP5MG/subunit g, ATP5MK/subunit k, ATP5MJ/subunit j, ATP5F1C/subunit gamma, ATP5F1D/subunit delta, ATP5F1E/subunit epsilon, ATP5PF/subunit F6, ATP5PB/subunit b, ATP5PD/subunit d, ATP5PO/subunit OSCP. ATP synthase complex consists of a soluble F(1) head domain (subunits alpha(3) and beta(3)) - the catalytic core - and a membrane F(0) domain - the membrane proton channel (subunits c, a, 8, e, f, g, k and j). These two domains are linked by a central stalk (subunits gamma, delta, and epsilon) rotating inside the F1 region and a stationary peripheral stalk (subunits F6, b, d, and OSCP). Interacts with DNAJC30; interaction is direct.

Its subcellular location is the mitochondrion inner membrane. The enzyme catalyses H(+)(in) = H(+)(out). In terms of biological role, subunit a, of the mitochondrial membrane ATP synthase complex (F(1)F(0) ATP synthase or Complex V) that produces ATP from ADP in the presence of a proton gradient across the membrane which is generated by electron transport complexes of the respiratory chain. ATP synthase complex consist of a soluble F(1) head domain - the catalytic core - and a membrane F(1) domain - the membrane proton channel. These two domains are linked by a central stalk rotating inside the F(1) region and a stationary peripheral stalk. During catalysis, ATP synthesis in the catalytic domain of F(1) is coupled via a rotary mechanism of the central stalk subunits to proton translocation. With the subunit c (ATP5MC1), forms the proton-conducting channel in the F(0) domain, that contains two crucial half-channels (inlet and outlet) that facilitate proton movement from the mitochondrial intermembrane space (IMS) into the matrix. Protons are taken up via the inlet half-channel and released through the outlet half-channel, following a Grotthuss mechanism. In Felis catus (Cat), this protein is ATP synthase F(0) complex subunit a.